Reading from the N-terminus, the 622-residue chain is Condensin-2 complex subunit H2 (622 aa).

Threonine 19 is subject to Phosphothreonine. A phosphoserine mark is found at serine 95, serine 199, serine 223, and serine 227. The segment at 207–354 (WNPKEPGRAE…PGQKRKRKGA (148 aa)) is disordered. Residues 262–273 (AAEPPEASAPEV) show a composition bias toward low complexity. Serine 282 carries the post-translational modification Phosphoserine. Positions 294–312 (TLRERKEAPEPASRLKDTP) are enriched in basic and acidic residues.

Belongs to the CND2 H2 (condensin-2 subunit 2) family. In terms of assembly, component of the condensin-2 complex, which contains the SMC2 and SMC4 heterodimer, and three non SMC subunits, NCAPG2, NCAPH2 and NCAPD3 that probably regulate the complex.

Its subcellular location is the nucleus. In terms of biological role, regulatory subunit of the condensin-2 complex, a complex that seems to provide chromosomes with an additional level of organization and rigidity and in establishing mitotic chromosome architecture. May promote the resolution of double-strand DNA catenanes (intertwines) between sister chromatids. Condensin-mediated compaction likely increases tension in catenated sister chromatids, providing directionality for type II topoisomerase-mediated strand exchanges toward chromatid decatenation. Required for decatenation of chromatin bridges at anaphase. Early in neurogenesis, may play an essential role to ensure accurate mitotic chromosome condensation in neuron stem cells, ultimately affecting neuron pool and cortex size. Seems to have lineage-specific role in T-cell development. The sequence is that of Condensin-2 complex subunit H2 (NCAPH2) from Bos taurus (Bovine).